The primary structure comprises 161 residues: Small ribosomal subunit protein uS9 (161 aa).

This sequence belongs to the universal ribosomal protein uS9 family.

This chain is Small ribosomal subunit protein uS9, found in Rickettsia felis (strain ATCC VR-1525 / URRWXCal2) (Rickettsia azadi).